The following is a 376-amino-acid chain: Succinyl-diaminopimelate desuccinylase (376 aa).

A Zn(2+)-binding site is contributed by histidine 67. Residue aspartate 69 is part of the active site. Residue aspartate 100 coordinates Zn(2+). Glutamate 134 acts as the Proton acceptor in catalysis. Zn(2+) is bound by residues glutamate 135, glutamate 163, and histidine 349.

It belongs to the peptidase M20A family. DapE subfamily. As to quaternary structure, homodimer. Zn(2+) serves as cofactor. Co(2+) is required as a cofactor.

The catalysed reaction is N-succinyl-(2S,6S)-2,6-diaminopimelate + H2O = (2S,6S)-2,6-diaminopimelate + succinate. It participates in amino-acid biosynthesis; L-lysine biosynthesis via DAP pathway; LL-2,6-diaminopimelate from (S)-tetrahydrodipicolinate (succinylase route): step 3/3. Functionally, catalyzes the hydrolysis of N-succinyl-L,L-diaminopimelic acid (SDAP), forming succinate and LL-2,6-diaminopimelate (DAP), an intermediate involved in the bacterial biosynthesis of lysine and meso-diaminopimelic acid, an essential component of bacterial cell walls. This Shewanella sediminis (strain HAW-EB3) protein is Succinyl-diaminopimelate desuccinylase.